The following is a 179-amino-acid chain: Stathmin-2 (179 aa).

The tract at residues M1–Y26 is membrane attachment. S16 carries the post-translational modification Phosphoserine. 2 S-palmitoyl cysteine lipidation sites follow: C22 and C24. The SLD domain maps to D38–G179. The regulatory/phosphorylation domain stretch occupies residues D39 to K96. S50 is subject to Phosphoserine. Residues S62 and S73 each carry the phosphoserine; by MAPK8 modification. Positions K75–G179 form a coiled coil. 2 positions are modified to phosphoserine: S80 and S97.

The protein belongs to the stathmin family. Interacts with ITM2C. Interacts with MAPK8. Interacts with KIFBP. Interacts (via the N-terminal region) with CIB1 (via C-terminal region); the interaction is direct, occurs in a calcium-dependent manner and attenuates the neurite outgrowth inhibition of STMN2. Post-translationally, sumoylated. In terms of processing, phosphorylated by MAPK9 and MAPK10 in the developing brain cortex. Phosphorylated mostly by MAPK8. N-terminal palmitoylation promotes specific anchoring to the cytosolic leaflet of Golgi membranes and subsequent vesicular trafficking along dendrites and axons. Neuronal Stathmins are substrates for palmitoyltransferases ZDHHC3, ZDHHC7 and ZDHHC15. In terms of tissue distribution, expressed in neurons (at protein level). Present in growth cones and abundant in developing neurons.

Its subcellular location is the cytoplasm. It is found in the perinuclear region. It localises to the cell projection. The protein localises to the growth cone. The protein resides in the axon. Its subcellular location is the membrane. It is found in the golgi apparatus. It localises to the endosome. The protein localises to the lamellipodium. Its function is as follows. Regulator of microtubule stability. When phosphorylated by MAPK8, stabilizes microtubules and consequently controls neurite length in cortical neurons. In the developing brain, negatively regulates the rate of exit from multipolar stage and retards radial migration from the ventricular zone. This Rattus norvegicus (Rat) protein is Stathmin-2 (Stmn2).